The primary structure comprises 114 residues: Nucleoid-associated protein PCC7424_2224 (114 aa).

This sequence belongs to the YbaB/EbfC family. As to quaternary structure, homodimer.

It is found in the cytoplasm. The protein localises to the nucleoid. Functionally, binds to DNA and alters its conformation. May be involved in regulation of gene expression, nucleoid organization and DNA protection. This Gloeothece citriformis (strain PCC 7424) (Cyanothece sp. (strain PCC 7424)) protein is Nucleoid-associated protein PCC7424_2224.